Reading from the N-terminus, the 414-residue chain is Histidine--tRNA ligase (414 aa).

Belongs to the class-II aminoacyl-tRNA synthetase family. In terms of assembly, homodimer.

It is found in the cytoplasm. The catalysed reaction is tRNA(His) + L-histidine + ATP = L-histidyl-tRNA(His) + AMP + diphosphate + H(+). The protein is Histidine--tRNA ligase (hisS) of Mycoplasma pneumoniae (strain ATCC 29342 / M129 / Subtype 1) (Mycoplasmoides pneumoniae).